Consider the following 94-residue polypeptide: DNA-directed RNA polymerase subunit omega (94 aa).

It belongs to the RNA polymerase subunit omega family. As to quaternary structure, the RNAP catalytic core consists of 2 alpha, 1 beta, 1 beta' and 1 omega subunit. When a sigma factor is associated with the core the holoenzyme is formed, which can initiate transcription.

It catalyses the reaction RNA(n) + a ribonucleoside 5'-triphosphate = RNA(n+1) + diphosphate. Its function is as follows. Promotes RNA polymerase assembly. Latches the N- and C-terminal regions of the beta' subunit thereby facilitating its interaction with the beta and alpha subunits. The chain is DNA-directed RNA polymerase subunit omega from Photobacterium profundum (strain SS9).